The sequence spans 457 residues: Subtilisin-like serine protease Pen c 2 (457 aa).

The first 16 residues, 1-16, serve as a signal peptide directing secretion; that stretch reads MKGFLGLALLPLLTAA. The propeptide at 17-136 is removed in mature form; the sequence is SPVSVESIHN…IEKDSEVHHF (120 aa). In terms of domain architecture, Inhibitor I9 spans 43–134; sequence SYIVVFKKHV…DYIEKDSEVH (92 aa). The 312-residue stretch at 146 to 457 folds into the Peptidase S8 domain; sequence PWGLARISHR…YTDIVAQGGY (312 aa). Residues D182 and H214 each act as charge relay system in the active site. Residues N244 and N284 are each glycosylated (N-linked (GlcNAc...) asparagine). The active-site Charge relay system is the S380. The N-linked (GlcNAc...) asparagine glycan is linked to N447.

It belongs to the peptidase S8 family.

In terms of biological role, serine protease. This Penicillium citrinum protein is Subtilisin-like serine protease Pen c 2.